The chain runs to 123 residues: Large ribosomal subunit protein bL17 (123 aa).

Belongs to the bacterial ribosomal protein bL17 family. Part of the 50S ribosomal subunit. Contacts protein L32.

This is Large ribosomal subunit protein bL17 from Borrelia hermsii (strain HS1 / DAH).